A 65-amino-acid chain; its full sequence is Large ribosomal subunit protein bL35 (65 aa).

2 stretches are compositionally biased toward basic residues: residues 1–16 (MPKM…RFKK) and 31–45 (HRFH…RQLR). Residues 1–47 (MPKMKTHRASAKRFKKTANGGLKSASAYTSHRFHGKTKKQRRQLRGT) are disordered.

The protein belongs to the bacterial ribosomal protein bL35 family.

This chain is Large ribosomal subunit protein bL35, found in Leuconostoc citreum (strain KM20).